Here is a 363-residue protein sequence, read N- to C-terminus: MASRLLHRLRHALASDGPGEAAAGPEAEQFPESSELEDDDAEGLSSRLSGTLSFTSAEDDPDDEDEDDEAGLDSPPSGDGASGEDAERSPPPDGQRSSQLLARQLQDFWKKSRNTLVPQRLLFEVTSANVVKDPPSKYVLYTLAVMGPGPPDRQPAQISRRYSDFERLHRNLQRQFRGPMSAISFPRKRLRRNFTAETIARRSRAFEQFLGHLQAVPELRQAPDLQDFFVLPELRRAQSLTCTGLYREALALWANAWQLQTQLGTPSGPDRPLLTLAGLAVCHQELEDPGEARACSEKALQLLGDKRPHPFLAPFLEAHVRLSWRLGLDKRQSEAQLQALQEAGLTSTPPPSLKELLIKEVLD.

Basic residues predominate over residues 1-11; it reads MASRLLHRLRH. The tract at residues 1–99 is disordered; that stretch reads MASRLLHRLR…PPPDGQRSSQ (99 aa). The span at 12–28 shows a compositional bias: low complexity; that stretch reads ALASDGPGEAAAGPEAE. Positions 46-56 are enriched in polar residues; sequence SRLSGTLSFTS. A compositionally biased stretch (acidic residues) spans 57-71; sequence AEDDPDDEDEDDEAG. Positions 119–236 constitute a PX domain; sequence QRLLFEVTSA…DFFVLPELRR (118 aa). A 1,2-diacyl-sn-glycero-3-phospho-(1D-myo-inositol-3-phosphate) is bound by residues Arg-161, Ser-163, Lys-188, and Arg-202.

This sequence belongs to the sorting nexin family. In terms of assembly, monomer.

The protein localises to the cytoplasmic vesicle membrane. The protein resides in the early endosome membrane. Functionally, binds to membranes enriched in phosphatidylinositol 3-phosphate (PtdIns(P3)) and phosphatidylinositol 4,5-bisphosphate. May be involved in several stages of intracellular trafficking. The sequence is that of Sorting nexin-21 from Mus musculus (Mouse).